A 427-amino-acid polypeptide reads, in one-letter code: MTELTGVSIVTYQHIKVPSQGEKITVNKAVLEVPDRPIIPFIEGDGIGIDIAPVMKNVVDAAVEKSYAGKRKIEWMEIYAGEKATKVYGKDNWLPDETLEAIKEYQVAIKGPLTTPVGGGIRSLNVALRQQLDLYVCLRPVRYFTGVPSPVKTPEKVNMVIFRENSEDIYAGIEWPAGSPEAVKLINFLQNEMGVKKIRFPETAGIGIKPVSKEGTSRLVRRAIQYAIDNDRDSVTLVHKGNIMKFTEGAFKDWGYEVAVKEFGAKPLDGGPWHVFENPKTGQKITIKDVIADAFLQQILLRPAEYSVIATLNLNGDYISDALAAEVGGIGIAPGANLSDTVGLFEATHGTAPKYAGQDKVNPGSLILSAEMMLRYLGWKEAADLVVQGIEGAIESKTVTYDFARLMTGAKEVSTSQFGKAIIKHIL.

NADP(+) is bound at residue Thr-114. Residues Ser-123, Asn-125, Arg-129, Arg-139, and Arg-163 each contribute to the D-threo-isocitrate site. Mg(2+) is bound at residue Asp-317. NADP(+)-binding positions include 349–355 (HGTAPKY), Asn-362, Tyr-401, and Arg-405.

The protein belongs to the isocitrate and isopropylmalate dehydrogenases family. In terms of assembly, homodimer. Mg(2+) serves as cofactor. It depends on Mn(2+) as a cofactor.

The catalysed reaction is D-threo-isocitrate + NADP(+) = 2-oxoglutarate + CO2 + NADPH. Functionally, catalyzes the oxidative decarboxylation of isocitrate to 2-oxoglutarate and carbon dioxide with the concomitant reduction of NADP(+). The polypeptide is Isocitrate dehydrogenase [NADP] (icd) (Coxiella burnetii (strain RSA 493 / Nine Mile phase I)).